We begin with the raw amino-acid sequence, 511 residues long: Type 2 DNA topoisomerase 6 subunit B-like (511 aa).

Positions Asp-398–Leu-485 are disordered. Polar residues predominate over residues Asp-408 to Ala-422. Positions Leu-440 to Ala-451 are enriched in low complexity. Residues Arg-466–Gly-475 show a composition bias toward basic and acidic residues.

It belongs to the TOP6B-like family. As to quaternary structure, heterotetramer of SPO11 and 2 TOP6BL chains. Interacts with SPO11. In terms of tissue distribution, detected in lung, spleen,colon and in skeletal muscle. Expressed in the ovaries, Fallopian tubes and uterus.

Its subcellular location is the chromosome. Functionally, component of a topoisomerase 6 complex specifically required for meiotic recombination. Together with SPO11, mediates DNA cleavage that forms the double-strand breaks (DSB) that initiate meiotic recombination. The complex promotes relaxation of negative and positive supercoiled DNA and DNA decatenation through cleavage and ligation cycles. This chain is Type 2 DNA topoisomerase 6 subunit B-like, found in Homo sapiens (Human).